Reading from the N-terminus, the 333-residue chain is Cytochrome f (333 aa).

The signal sequence occupies residues 1–44 (MRNASVTARLTRSVRAIVKTLLIAIATVTFYFSCDLALPQSAAA). Residues Tyr45, Cys66, Cys69, and His70 each coordinate heme. The helical transmembrane segment at 301 to 318 (GLIAFVALVMLAQVMLVL) threads the bilayer.

It belongs to the cytochrome f family. In terms of assembly, the 4 large subunits of the cytochrome b6-f complex are cytochrome b6, subunit IV (17 kDa polypeptide, PetD), cytochrome f and the Rieske protein, while the 4 small subunits are PetG, PetL, PetM and PetN. The complex functions as a dimer. The cofactor is heme.

Its subcellular location is the cellular thylakoid membrane. Component of the cytochrome b6-f complex, which mediates electron transfer between photosystem II (PSII) and photosystem I (PSI), cyclic electron flow around PSI, and state transitions. This is Cytochrome f (petA) from Desmonostoc sp. (strain PCC 7906) (Nostoc sp. (strain PCC 7906)).